Consider the following 476-residue polypeptide: MDYFPVFLNIKQRNCLIVGGGSVAARKAKLLLRAGAHIHVVSPTINAEFTGLLQQFSSISHNAETFRPDHLQGRVLVIAATHDRATNQAVSVAARKAGIPVNVVDNPDLCTFIMPSILDRSPIIVAVSSGGGSPVLARLLRARLEALIPAAYGRLATYAAQFRGQVRQHFSRQENRRFFWEKMLQGPFAEMVFAGKDQAAQDYLLETLNNSVDQPPIGEVYLVGAGPGDPDLLTFRAMRLMQQADVVIYDRLVAPAILDMVRQDADRIYAGKERNRHTLPQTSINNLLIKLAQEGKRVLRLKGGDPFIFGRGGEEIETLSQHQIPFQVVPGITAASGVASYAGIPLTHRDYAHSCVFVTGHLKDNTVQLDWSALARPNQTIVVYMGLLGVSELCRQLIAHGLPKTTPAAIIQQGTTPNQCVLTGTLATLPTIIQENPLKPPTLIIVGEVVKLRQRLAWFNSTSESLGNTPGYSKHP.

The segment at 1–204 (MDYFPVFLNI…GKDQAAQDYL (204 aa)) is precorrin-2 dehydrogenase /sirohydrochlorin ferrochelatase. NAD(+)-binding positions include 22-23 (SV) and 43-44 (PT). Ser-129 bears the Phosphoserine mark. A uroporphyrinogen-III C-methyltransferase region spans residues 218–476 (GEVYLVGAGP…GNTPGYSKHP (259 aa)). Pro-227 lines the S-adenosyl-L-methionine pocket. The active-site Proton acceptor is the Asp-250. Lys-272 functions as the Proton donor in the catalytic mechanism. Residues 303 to 305 (GGD), Ile-308, 333 to 334 (TA), Met-385, and Gly-414 each bind S-adenosyl-L-methionine.

It in the N-terminal section; belongs to the precorrin-2 dehydrogenase / sirohydrochlorin ferrochelatase family. In the C-terminal section; belongs to the precorrin methyltransferase family.

It catalyses the reaction uroporphyrinogen III + 2 S-adenosyl-L-methionine = precorrin-2 + 2 S-adenosyl-L-homocysteine + H(+). It carries out the reaction precorrin-2 + NAD(+) = sirohydrochlorin + NADH + 2 H(+). The catalysed reaction is siroheme + 2 H(+) = sirohydrochlorin + Fe(2+). It functions in the pathway cofactor biosynthesis; adenosylcobalamin biosynthesis; precorrin-2 from uroporphyrinogen III: step 1/1. The protein operates within cofactor biosynthesis; adenosylcobalamin biosynthesis; sirohydrochlorin from precorrin-2: step 1/1. Its pathway is porphyrin-containing compound metabolism; siroheme biosynthesis; precorrin-2 from uroporphyrinogen III: step 1/1. It participates in porphyrin-containing compound metabolism; siroheme biosynthesis; siroheme from sirohydrochlorin: step 1/1. It functions in the pathway porphyrin-containing compound metabolism; siroheme biosynthesis; sirohydrochlorin from precorrin-2: step 1/1. Functionally, multifunctional enzyme that catalyzes the SAM-dependent methylations of uroporphyrinogen III at position C-2 and C-7 to form precorrin-2 via precorrin-1. Then it catalyzes the NAD-dependent ring dehydrogenation of precorrin-2 to yield sirohydrochlorin. Finally, it catalyzes the ferrochelation of sirohydrochlorin to yield siroheme. The chain is Siroheme synthase from Nitrosomonas eutropha (strain DSM 101675 / C91 / Nm57).